The primary structure comprises 152 residues: SsrA-binding protein (152 aa).

This sequence belongs to the SmpB family.

The protein resides in the cytoplasm. In terms of biological role, required for rescue of stalled ribosomes mediated by trans-translation. Binds to transfer-messenger RNA (tmRNA), required for stable association of tmRNA with ribosomes. tmRNA and SmpB together mimic tRNA shape, replacing the anticodon stem-loop with SmpB. tmRNA is encoded by the ssrA gene; the 2 termini fold to resemble tRNA(Ala) and it encodes a 'tag peptide', a short internal open reading frame. During trans-translation Ala-aminoacylated tmRNA acts like a tRNA, entering the A-site of stalled ribosomes, displacing the stalled mRNA. The ribosome then switches to translate the ORF on the tmRNA; the nascent peptide is terminated with the 'tag peptide' encoded by the tmRNA and targeted for degradation. The ribosome is freed to recommence translation, which seems to be the essential function of trans-translation. The protein is SsrA-binding protein of Rickettsia rickettsii.